We begin with the raw amino-acid sequence, 583 residues long: 2-succinyl-5-enolpyruvyl-6-hydroxy-3-cyclohexene-1-carboxylate synthase (583 aa).

This sequence belongs to the TPP enzyme family. MenD subfamily. In terms of assembly, homodimer. Mg(2+) serves as cofactor. The cofactor is Mn(2+). It depends on thiamine diphosphate as a cofactor.

It carries out the reaction isochorismate + 2-oxoglutarate + H(+) = 5-enolpyruvoyl-6-hydroxy-2-succinyl-cyclohex-3-ene-1-carboxylate + CO2. It functions in the pathway quinol/quinone metabolism; 1,4-dihydroxy-2-naphthoate biosynthesis; 1,4-dihydroxy-2-naphthoate from chorismate: step 2/7. The protein operates within quinol/quinone metabolism; menaquinone biosynthesis. Catalyzes the thiamine diphosphate-dependent decarboxylation of 2-oxoglutarate and the subsequent addition of the resulting succinic semialdehyde-thiamine pyrophosphate anion to isochorismate to yield 2-succinyl-5-enolpyruvyl-6-hydroxy-3-cyclohexene-1-carboxylate (SEPHCHC). In Chlorobium phaeovibrioides (strain DSM 265 / 1930) (Prosthecochloris vibrioformis (strain DSM 265)), this protein is 2-succinyl-5-enolpyruvyl-6-hydroxy-3-cyclohexene-1-carboxylate synthase.